Reading from the N-terminus, the 232-residue chain is Flagellar L-ring protein (232 aa).

An N-terminal signal peptide occupies residues 1–21; that stretch reads MQKNAAHTYAISSLLVLSLTG. Residue Cys-22 is the site of N-palmitoyl cysteine attachment. A lipid anchor (S-diacylglycerol cysteine) is attached at Cys-22.

Belongs to the FlgH family. As to quaternary structure, the basal body constitutes a major portion of the flagellar organelle and consists of four rings (L,P,S, and M) mounted on a central rod.

It localises to the cell outer membrane. Its subcellular location is the bacterial flagellum basal body. In terms of biological role, assembles around the rod to form the L-ring and probably protects the motor/basal body from shearing forces during rotation. The chain is Flagellar L-ring protein from Shigella dysenteriae serotype 1 (strain Sd197).